The primary structure comprises 305 residues: Ornithine carbamoyltransferase (305 aa).

Carbamoyl phosphate is bound by residues serine 50–threonine 53, glutamine 77, arginine 101, and histidine 128–glutamine 131. L-ornithine contacts are provided by residues asparagine 162, aspartate 220, and serine 224–methionine 225. Carbamoyl phosphate-binding positions include cysteine 260–leucine 261 and arginine 288.

It belongs to the aspartate/ornithine carbamoyltransferase superfamily. OTCase family.

The protein resides in the cytoplasm. It carries out the reaction carbamoyl phosphate + L-ornithine = L-citrulline + phosphate + H(+). It participates in amino-acid degradation; L-arginine degradation via ADI pathway; carbamoyl phosphate from L-arginine: step 2/2. Functionally, reversibly catalyzes the transfer of the carbamoyl group from carbamoyl phosphate (CP) to the N(epsilon) atom of ornithine (ORN) to produce L-citrulline. In Akkermansia muciniphila (strain ATCC BAA-835 / DSM 22959 / JCM 33894 / BCRC 81048 / CCUG 64013 / CIP 107961 / Muc), this protein is Ornithine carbamoyltransferase.